A 1007-amino-acid polypeptide reads, in one-letter code: Ephrin type-A receptor 10 (1007 aa).

The N-terminal stretch at 1-22 (METGAGPHPLRLFVCLIPLCLA) is a signal peptide. Residues 23 to 565 (LLLGPGRPGT…APGSRDQSPA (543 aa)) lie on the Extracellular side of the membrane. The region spanning 35–216 (EVILLDSKAS…YYKQCRATVR (182 aa)) is the Eph LBD domain. An N-linked (GlcNAc...) asparagine glycan is attached at Asn-311. Disordered regions lie at residues 323–343 (ARSP…APRD) and 467–486 (PQSV…PGTN). 2 consecutive Fibronectin type-III domains span residues 340–452 (APRD…TGPG) and 456–554 (EEDE…TPGE). A glycan (N-linked (GlcNAc...) asparagine) is linked at Asn-486. Residues 566-586 (VVVTVVTISALLVLGSVMSVL) form a helical membrane-spanning segment. The Cytoplasmic portion of the chain corresponds to 587–1007 (AIWRRPCDGK…LQLQGQGVQV (421 aa)). Residues 644-899 (VTLEKSLGAG…PRFSQIHSIL (256 aa)) enclose the Protein kinase domain. In terms of domain architecture, SAM spans 932 to 996 (PSFGSVGAWL…LSGISALQTR (65 aa)).

It belongs to the protein kinase superfamily. Tyr protein kinase family. Ephrin receptor subfamily. As to expression, expressed in the cochlea, in the organ of Corti, spiral ganglion, and stria vascularis.

The protein localises to the cell membrane. The catalysed reaction is L-tyrosyl-[protein] + ATP = O-phospho-L-tyrosyl-[protein] + ADP + H(+). Its function is as follows. Receptor for members of the ephrin-A family. Binds to EFNA3, EFNA4 and EFNA5. The chain is Ephrin type-A receptor 10 (Epha10) from Mus musculus (Mouse).